We begin with the raw amino-acid sequence, 246 residues long: Ribosomal RNA small subunit methyltransferase J (246 aa).

S-adenosyl-L-methionine-binding positions include 115-116 and Asp169; that span reads ER.

This sequence belongs to the methyltransferase superfamily. RsmJ family.

It localises to the cytoplasm. The catalysed reaction is guanosine(1516) in 16S rRNA + S-adenosyl-L-methionine = N(2)-methylguanosine(1516) in 16S rRNA + S-adenosyl-L-homocysteine + H(+). Specifically methylates the guanosine in position 1516 of 16S rRNA. The sequence is that of Ribosomal RNA small subunit methyltransferase J from Buchnera aphidicola subsp. Acyrthosiphon pisum (strain Tuc7).